The sequence spans 512 residues: NAD(P) transhydrogenase subunit alpha (512 aa).

Residues Met1 to Val400 lie on the Cytoplasmic side of the membrane. Residues Gln125–Asp128, Val175, Asp195–Arg197, and Gly225 each bind NAD(+). Residues Ser375–Lys394 form a disordered region. 2 consecutive transmembrane segments (helical) span residues Lys401–Ala421 and Ala422–Trp442. Residues Asn443–Pro451 lie on the Cytoplasmic side of the membrane. The chain crosses the membrane as a helical span at residues Leu452 to Arg472. Residues Gln473–Leu478 lie on the Periplasmic side of the membrane. A helical transmembrane segment spans residues Phe479–Phe499. Residues Arg500–Gly512 lie on the Cytoplasmic side of the membrane.

The protein belongs to the AlaDH/PNT family. Heterodimer of an alpha (PntA) and a beta (PntB) chain.

The protein resides in the cell inner membrane. It carries out the reaction NAD(+) + NADPH + H(+)(in) = NADH + NADP(+) + H(+)(out). Its function is as follows. The transhydrogenation between NADH and NADP is coupled to respiration and ATP hydrolysis and functions as a proton pump across the membrane. The sequence is that of NAD(P) transhydrogenase subunit alpha (pntA) from Haemophilus influenzae (strain ATCC 51907 / DSM 11121 / KW20 / Rd).